The following is a 339-amino-acid chain: Ketol-acid reductoisomerase (NADP(+)) (339 aa).

The KARI N-terminal Rossmann domain occupies M1 to T182. Residues Y24–Q27, R48, S51, T53, and D83–Q86 each bind NADP(+). H108 is a catalytic residue. Residue G134 participates in NADP(+) binding. One can recognise a KARI C-terminal knotted domain in the interval T183–I328. The Mg(2+) site is built by D191, E195, E227, and E231. Position 252 (S252) interacts with substrate.

The protein belongs to the ketol-acid reductoisomerase family. Requires Mg(2+) as cofactor.

The catalysed reaction is (2R)-2,3-dihydroxy-3-methylbutanoate + NADP(+) = (2S)-2-acetolactate + NADPH + H(+). It catalyses the reaction (2R,3R)-2,3-dihydroxy-3-methylpentanoate + NADP(+) = (S)-2-ethyl-2-hydroxy-3-oxobutanoate + NADPH + H(+). The protein operates within amino-acid biosynthesis; L-isoleucine biosynthesis; L-isoleucine from 2-oxobutanoate: step 2/4. It participates in amino-acid biosynthesis; L-valine biosynthesis; L-valine from pyruvate: step 2/4. Its function is as follows. Involved in the biosynthesis of branched-chain amino acids (BCAA). Catalyzes an alkyl-migration followed by a ketol-acid reduction of (S)-2-acetolactate (S2AL) to yield (R)-2,3-dihydroxy-isovalerate. In the isomerase reaction, S2AL is rearranged via a Mg-dependent methyl migration to produce 3-hydroxy-3-methyl-2-ketobutyrate (HMKB). In the reductase reaction, this 2-ketoacid undergoes a metal-dependent reduction by NADPH to yield (R)-2,3-dihydroxy-isovalerate. In Parvibaculum lavamentivorans (strain DS-1 / DSM 13023 / NCIMB 13966), this protein is Ketol-acid reductoisomerase (NADP(+)).